Consider the following 155-residue polypeptide: Large ribosomal subunit protein uL13 (155 aa).

This sequence belongs to the universal ribosomal protein uL13 family. As to quaternary structure, part of the 50S ribosomal subunit.

In terms of biological role, this protein is one of the early assembly proteins of the 50S ribosomal subunit, although it is not seen to bind rRNA by itself. It is important during the early stages of 50S assembly. The chain is Large ribosomal subunit protein uL13 from Rickettsia felis (strain ATCC VR-1525 / URRWXCal2) (Rickettsia azadi).